The primary structure comprises 212 residues: Thymidylate kinase (212 aa).

13–20 (GLEGAGKS) serves as a coordination point for ATP.

It belongs to the thymidylate kinase family.

The enzyme catalyses dTMP + ATP = dTDP + ADP. Its function is as follows. Phosphorylation of dTMP to form dTDP in both de novo and salvage pathways of dTTP synthesis. The protein is Thymidylate kinase of Legionella pneumophila (strain Paris).